The primary structure comprises 297 residues: Retroviral cyclin (297 aa).

The 93-residue stretch at 21-113 (PVYWKELLNW…KPSLLLTETM (93 aa)) folds into the Cyclin N-terminal domain. Residues 21 to 113 (PVYWKELLNW…KPSLLLTETM (93 aa)) are transcription activation domain. Positions 222–270 (QINLDFAEAEQREAAERRALLEREREQQLQEARERLDDVMAVLEAEVAI) form a coiled coil.

It belongs to the cyclin family. Interacts (via transcription activation domain) with host TAF9 in vitro. Interacts with host CDK3 and CDK8.

The protein resides in the host nucleus. In terms of biological role, transforming protein which induces the development of dermal sarcomas. Induces positive and negative regulation of transcription from host and viral promoters by interacting with various cellular factors involved in protein transcription regulation. The chain is Retroviral cyclin (orfA) from Sander vitreus (Walleye).